The following is a 155-amino-acid chain: MSNINFLPTIEDAYGALSAEQLDILRQQVLSEGGDIASIQSRFNYAWGLVKSHDAEDQRLGVKLLTDIYKESPMRRRESLYYLAIGCYKLGEYAMAKRYADALVAHEPDNAQARTLKAMVEQKIQTEGLKGAALVGAGLAAVAAAAGFLLRQRRP.

Residues M1–K130 are Cytoplasmic-facing. The stretch at R77 to N110 is one TPR repeat. A helical transmembrane segment spans residues G131–L150. The Mitochondrial intermembrane segment spans residues R151 to P155.

The protein belongs to the FIS1 family.

It localises to the mitochondrion outer membrane. Has a role in mitochondrial fission. Has a role in outer membrane fission but not matrix separation. The sequence is that of Mitochondrial fission 1 protein (FIS1) from Eremothecium gossypii (strain ATCC 10895 / CBS 109.51 / FGSC 9923 / NRRL Y-1056) (Yeast).